The sequence spans 223 residues: Neurotrophic factor BDNF precursor form (223 aa).

The N-terminal stretch at 1 to 5 (SCMKA) is a signal peptide. Positions 6–114 (APMKEASIRG…AANMSMRVRR (109 aa)) are excised as a propeptide. A glycan (N-linked (GlcNAc...) asparagine) is linked at asparagine 107. Intrachain disulfides connect cysteine 127/cysteine 194 and cysteine 172/cysteine 223.

Belongs to the NGF-beta family.

It is found in the secreted. Its function is as follows. Promotes the survival of neuronal populations that are all located either in the central nervous system or directly connected to it. This chain is Neurotrophic factor BDNF precursor form (BDNF), found in Tropidophis haetianus (Haitian dwarf boa).